Consider the following 235-residue polypeptide: Probable 2-phosphosulfolactate phosphatase (235 aa).

This sequence belongs to the ComB family. The cofactor is Mg(2+).

It catalyses the reaction (2R)-O-phospho-3-sulfolactate + H2O = (2R)-3-sulfolactate + phosphate. This is Probable 2-phosphosulfolactate phosphatase from Clostridium novyi (strain NT).